We begin with the raw amino-acid sequence, 777 residues long: MGSGGVIHCRCAKCFCYPTKRRIKRRPRNLTILSLPEDVLFHILKWLSVGDILAVRAVHSHLKYLVDNHASVWASASFQELWPSPQNLKLFERAAEKGNFEAAVKLGIAYLYNEGLSVSDEACAEVNGLKASRFFSMAERLNTGSEPFIWLFIRPPWSVSGSCCKAVVHDSLRAECQLQRSHKASILHCLGRVLNLFEDEEKRKQARSLLEESSRQGCLISSYLLWESDRKVDMSDPGRCLHSFRKLRDYAAKGCWEAQLALAKACAGGSQLGLEGKACSESVCQLFQASQAVNKQQIFSVQKGLSDTMRYILIDWLVEVATMKDFTSLCLHLTVECVDRYLRRRLVPRYKLQLLGIACMVICTRFISKEILTIREAVWLTDNTYKYEDLVRVMGEIISALEGKIRIPTVVDYKEVLLTLVPVAPRTQHLCSFLCELTLLHTSLSIYAPARLASAALLLARLMHGQTQPWTTHLWDLTGFSYSDLVPCVLSLHKKCFHDDAPKDYRQVSLTAVKQRFEDKCYEEISREEVLSYADLCSTIGVKQESPEPPSFPSSGEIHTFLSSPSGRRSKRKRENSLQEDRGSFVTTPTAELSNQEETLLGSLLDWSLECCSGYEGDQESEGEKEGDVTAPSRLLDVTVVYLNPEEHCCQESSDEEAWPEDKIHPAPGTQAPPASAPRPLLCNRGDRAKDITTSGYSSVSSSSPISSLDGGMGGSPQSTSVLSVGSHSSTKPCHHQAKKSCLQCRPPNSPESGVHQQPVKRQNLSVHSDKDMHLAS.

Residues 20–28 (KRRIKRRPR) carry the Nuclear localization signal 1 motif. One can recognise an F-box domain in the interval 29–76 (NLTILSLPEDVLFHILKWLSVGDILAVRAVHSHLKYLVDNHASVWASA). One can recognise a Cyclin N-terminal domain in the interval 288–405 (QASQAVNKQQ…EIISALEGKI (118 aa)). 3 short sequence motifs (d box) span residues 310–313 (RYIL), 343–346 (RRRL), and 349–352 (RYKL). Disordered regions lie at residues 544–591 (QESP…TPTA) and 651–777 (QESS…HLAS). Positions 568–574 (RRSKRKR) match the Nuclear localization signal 2 motif. The PEST stretch occupies residues 582-761 (RGSFVTTPTA…ESGVHQQPVK (180 aa)). Low complexity-rich tracts occupy residues 695 to 708 (SGYSSVSSSSPISS) and 719 to 731 (STSVLSVGSHSST). Positions 751-767 (PESGVHQQPVKRQNLSV) are enriched in polar residues. A D box 4 motif is present at residues 762–765 (RQNL). Basic and acidic residues predominate over residues 768–777 (HSDKDMHLAS).

The protein belongs to the cyclin family. Cyclin AB subfamily. Component of the SCF(CCNF) complex consisting of CUL1, RBX1, SKP1 and CCNF. Interacts with SKP1. Interacts with CUL1. Interacts with CCNB1; interaction is required for nuclear localization of CCNB1. Interacts with CCP110; this interaction leads to CCP110 ubiquitination and degradation via the proteasome pathway. Interacts (via the Cyclin N-terminal domain) with MYBL2/BMYB. Interacts with FZR1/CDH1 (via N-terminus). Interacts with RRM2 (via Cy motif and when phosphorylated at 'Thr-33'); the interaction occurs exclusively in G2 and early M. Interacts with CDC6 (via Cy motif); the interaction takes place during G2 and M phase. Degraded when the spindle assembly checkpoint is activated during the G2-M transition. Degradation is not dependent on the proteasome or ubiquitin and depends on the C-terminal PEST sequence. Post-translationally, phosphorylated just before cells enter into mitosis. In terms of processing, ubiquitinated by the anaphase-promoting complex (APC/C); leading to its degradation by the proteasome.

The protein localises to the nucleus. It localises to the cytoplasm. Its subcellular location is the perinuclear region. The protein resides in the cytoskeleton. It is found in the microtubule organizing center. The protein localises to the centrosome. It localises to the centriole. In terms of biological role, substrate recognition component of a SCF (SKP1-CUL1-F-box protein) E3 ubiquitin-protein ligase complex which mediates the ubiquitination and subsequent proteasomal degradation of target proteins. The SCF(CCNF) E3 ubiquitin-protein ligase complex is an integral component of the ubiquitin proteasome system (UPS) and links proteasome degradation to the cell cycle. Mediates the substrate recognition and the proteasomal degradation of various target proteins involved in the regulation of cell cycle progression and in the maintenance of genome stability. Mediates the ubiquitination and subsequent proteasomal degradation of CP110 during G2 phase, thereby acting as an inhibitor of centrosome reduplication. In G2, mediates the ubiquitination and proteasomal degradation of CDC6, thereby suppressing DNA re-replication and preventing genome instability. Involved in the ubiquitination and degradation of the substrate adapter CDH1 of the anaphase-promoting complex (APC/C), thereby acting as an antagonist of APC/C in regulating G1 progression and S phase entry. May play a role in the G2 cell cycle checkpoint control after DNA damage, possibly by promoting the ubiquitination of MYBL2/BMYB. The protein is Cyclin-F (Ccnf) of Mus musculus (Mouse).